Here is a 156-residue protein sequence, read N- to C-terminus: 6,7-dimethyl-8-ribityllumazine synthase (156 aa).

5-amino-6-(D-ribitylamino)uracil-binding positions include phenylalanine 22, 57–59 (AVE), and 81–83 (SVI). 86-87 (GT) is a (2S)-2-hydroxy-3-oxobutyl phosphate binding site. Residue histidine 89 is the Proton donor of the active site. A 5-amino-6-(D-ribitylamino)uracil-binding site is contributed by phenylalanine 114. Arginine 128 lines the (2S)-2-hydroxy-3-oxobutyl phosphate pocket.

This sequence belongs to the DMRL synthase family. In terms of assembly, forms an icosahedral capsid composed of 60 subunits, arranged as a dodecamer of pentamers.

The catalysed reaction is (2S)-2-hydroxy-3-oxobutyl phosphate + 5-amino-6-(D-ribitylamino)uracil = 6,7-dimethyl-8-(1-D-ribityl)lumazine + phosphate + 2 H2O + H(+). The protein operates within cofactor biosynthesis; riboflavin biosynthesis; riboflavin from 2-hydroxy-3-oxobutyl phosphate and 5-amino-6-(D-ribitylamino)uracil: step 1/2. Functionally, catalyzes the formation of 6,7-dimethyl-8-ribityllumazine by condensation of 5-amino-6-(D-ribitylamino)uracil with 3,4-dihydroxy-2-butanone 4-phosphate. This is the penultimate step in the biosynthesis of riboflavin. The polypeptide is 6,7-dimethyl-8-ribityllumazine synthase (Aliivibrio fischeri (strain ATCC 700601 / ES114) (Vibrio fischeri)).